The following is a 499-amino-acid chain: Pentatricopeptide repeat-containing protein At5g61800 (499 aa).

10 PPR repeats span residues 78 to 113 (STFCFNTIIRICTLHEPSSLSSKRFFVEMRRRSVPP), 114 to 150 (DFHTFPFVFKACAAKKNGDLTLVKTLHCQALRFGLLS), 151 to 181 (DLFTLNTLIRVYSLIAPIDSALQLFDENPQR), 182 to 212 (DVVTYNVLIDGLVKAREIVRARELFDSMPLR), 213 to 247 (DLVSWNSLISGYAQMNHCREAIKLFDEMVALGLKP), 248 to 282 (DNVAIVSTLSACAQSGDWQKGKAIHDYTKRKRLFI), 283 to 313 (DSFLATGLVDFYAKCGFIDTAMEIFELCSDK), 314 to 348 (TLFTWNAMITGLAMHGNGELTVDYFRKMVSSGIKP), 349 to 379 (DGVTFISVLVGCSHSGLVDEARNLFDQMRSL), and 385 to 419 (EMKHYGCMADLLGRAGLIEEAAEMIEQMPKDGGNR). Positions 424–499 (AWSGLLGGCR…KNVGFSKVLS (76 aa)) are type E motif.

The protein belongs to the PPR family. PCMP-E subfamily.

This Arabidopsis thaliana (Mouse-ear cress) protein is Pentatricopeptide repeat-containing protein At5g61800 (PCMP-E8).